Here is a 481-residue protein sequence, read N- to C-terminus: Proline--tRNA ligase (481 aa).

This sequence belongs to the class-II aminoacyl-tRNA synthetase family. ProS type 3 subfamily. As to quaternary structure, homodimer.

It is found in the cytoplasm. The enzyme catalyses tRNA(Pro) + L-proline + ATP = L-prolyl-tRNA(Pro) + AMP + diphosphate. In terms of biological role, catalyzes the attachment of proline to tRNA(Pro) in a two-step reaction: proline is first activated by ATP to form Pro-AMP and then transferred to the acceptor end of tRNA(Pro). The sequence is that of Proline--tRNA ligase from Chlorobaculum tepidum (strain ATCC 49652 / DSM 12025 / NBRC 103806 / TLS) (Chlorobium tepidum).